Here is a 260-residue protein sequence, read N- to C-terminus: Exosome complex component Rrp42 (260 aa).

This sequence belongs to the RNase PH family. Rrp42 subfamily. Component of the archaeal exosome complex. Forms a hexameric ring-like arrangement composed of 3 Rrp41-Rrp42 heterodimers. The hexameric ring associates with a trimer of Rrp4 and/or Csl4 subunits.

The protein localises to the cytoplasm. Its function is as follows. Non-catalytic component of the exosome, which is a complex involved in RNA degradation. Contributes to the structuring of the Rrp41 active site. The chain is Exosome complex component Rrp42 from Thermoplasma acidophilum (strain ATCC 25905 / DSM 1728 / JCM 9062 / NBRC 15155 / AMRC-C165).